The sequence spans 257 residues: Pantothenate synthetase (257 aa).

Residue M29–H36 coordinates ATP. Residue H36 is the Proton donor of the active site. (R)-pantoate is bound at residue Q60. Residue Q60 participates in beta-alanine binding. Residue G145–D148 participates in ATP binding. Position 151 (Q151) interacts with (R)-pantoate. ATP-binding positions include V174 and L182–R185.

This sequence belongs to the pantothenate synthetase family. In terms of assembly, homodimer.

It is found in the cytoplasm. The enzyme catalyses (R)-pantoate + beta-alanine + ATP = (R)-pantothenate + AMP + diphosphate + H(+). The protein operates within cofactor biosynthesis; (R)-pantothenate biosynthesis; (R)-pantothenate from (R)-pantoate and beta-alanine: step 1/1. Catalyzes the condensation of pantoate with beta-alanine in an ATP-dependent reaction via a pantoyl-adenylate intermediate. The chain is Pantothenate synthetase from Coxiella burnetii (strain Dugway 5J108-111).